The following is a 63-amino-acid chain: MSRKCDICGKGLVAGVQYSHSHRQSKRTWLPNIRKIKAVVDGTPKTIHVCTRCLRSGKVQRAV.

Belongs to the bacterial ribosomal protein bL28 family.

The chain is Large ribosomal subunit protein bL28 from Clostridium acetobutylicum (strain ATCC 824 / DSM 792 / JCM 1419 / IAM 19013 / LMG 5710 / NBRC 13948 / NRRL B-527 / VKM B-1787 / 2291 / W).